The following is a 157-amino-acid chain: SsrA-binding protein (157 aa).

Residues 133 to 157 (HDKRNSIKEREGKREVERALKSRSR) form a disordered region.

Belongs to the SmpB family.

It is found in the cytoplasm. Required for rescue of stalled ribosomes mediated by trans-translation. Binds to transfer-messenger RNA (tmRNA), required for stable association of tmRNA with ribosomes. tmRNA and SmpB together mimic tRNA shape, replacing the anticodon stem-loop with SmpB. tmRNA is encoded by the ssrA gene; the 2 termini fold to resemble tRNA(Ala) and it encodes a 'tag peptide', a short internal open reading frame. During trans-translation Ala-aminoacylated tmRNA acts like a tRNA, entering the A-site of stalled ribosomes, displacing the stalled mRNA. The ribosome then switches to translate the ORF on the tmRNA; the nascent peptide is terminated with the 'tag peptide' encoded by the tmRNA and targeted for degradation. The ribosome is freed to recommence translation, which seems to be the essential function of trans-translation. The chain is SsrA-binding protein from Verminephrobacter eiseniae (strain EF01-2).